The sequence spans 565 residues: Dihydroxy-acid dehydratase (565 aa).

Asp-80 provides a ligand contact to Mg(2+). [2Fe-2S] cluster is bound at residue Cys-121. Mg(2+) contacts are provided by Asp-122 and Lys-123. N6-carboxylysine is present on Lys-123. [2Fe-2S] cluster is bound at residue Cys-194. Position 447 (Glu-447) interacts with Mg(2+). Ser-473 acts as the Proton acceptor in catalysis.

This sequence belongs to the IlvD/Edd family. Homodimer. It depends on [2Fe-2S] cluster as a cofactor. Mg(2+) serves as cofactor.

The catalysed reaction is (2R)-2,3-dihydroxy-3-methylbutanoate = 3-methyl-2-oxobutanoate + H2O. It catalyses the reaction (2R,3R)-2,3-dihydroxy-3-methylpentanoate = (S)-3-methyl-2-oxopentanoate + H2O. The protein operates within amino-acid biosynthesis; L-isoleucine biosynthesis; L-isoleucine from 2-oxobutanoate: step 3/4. It functions in the pathway amino-acid biosynthesis; L-valine biosynthesis; L-valine from pyruvate: step 3/4. In terms of biological role, functions in the biosynthesis of branched-chain amino acids. Catalyzes the dehydration of (2R,3R)-2,3-dihydroxy-3-methylpentanoate (2,3-dihydroxy-3-methylvalerate) into 2-oxo-3-methylpentanoate (2-oxo-3-methylvalerate) and of (2R)-2,3-dihydroxy-3-methylbutanoate (2,3-dihydroxyisovalerate) into 2-oxo-3-methylbutanoate (2-oxoisovalerate), the penultimate precursor to L-isoleucine and L-valine, respectively. The chain is Dihydroxy-acid dehydratase from Chlorobium phaeovibrioides (strain DSM 265 / 1930) (Prosthecochloris vibrioformis (strain DSM 265)).